Consider the following 500-residue polypeptide: Carnosic acid synthase (500 aa).

The chain crosses the membrane as a helical span at residues 4–24 (LILLSLAFLASCVVAYSRRRP). Heme is bound at residue C443.

This sequence belongs to the cytochrome P450 family. Heme is required as a cofactor. As to expression, expressed in leaf glandular trichomes.

Its subcellular location is the membrane. The catalysed reaction is 11-hydroxyferruginol + 3 reduced [NADPH--hemoprotein reductase] + 3 O2 = carnosate + 3 oxidized [NADPH--hemoprotein reductase] + 4 H2O + 4 H(+). It carries out the reaction miltiradiene + 2 reduced [NADPH--hemoprotein reductase] + 2 O2 = miltiradien-20-al + 2 oxidized [NADPH--hemoprotein reductase] + 3 H2O + 2 H(+). It catalyses the reaction ferruginol + 3 reduced [NADPH--hemoprotein reductase] + 3 O2 = pisiferate + 3 oxidized [NADPH--hemoprotein reductase] + 4 H2O + 4 H(+). It functions in the pathway secondary metabolite biosynthesis; terpenoid biosynthesis. Its function is as follows. Monooxygenase involved in the biosynthesis of carnosate, a potent antioxidant labdane-related diterpene natural product. Catalyzes the oxidation of 11-hydroxyferruginol to produce carnosate. Mediates the conversion of miltiradien into miltiradien-20-al. Also involved in the production of pisiferic acid and derivative products from ferruginol. In Salvia pomifera (Apple sage), this protein is Carnosic acid synthase.